We begin with the raw amino-acid sequence, 94 residues long: DNA-binding protein HU (94 aa).

A disordered region spans residues 55–94 (RAERPGRNPKTGEPIMIAASNNPSFKPGKALKDAVKSSAG). Residues 84 to 94 (ALKDAVKSSAG) are compositionally biased toward basic and acidic residues.

This sequence belongs to the bacterial histone-like protein family.

Histone-like DNA-binding protein which is capable of wrapping DNA to stabilize it, and thus to prevent its denaturation under extreme environmental conditions. The chain is DNA-binding protein HU (hup) from Xylella fastidiosa (strain Temecula1 / ATCC 700964).